Here is an 805-residue protein sequence, read N- to C-terminus: Leucine--tRNA ligase (805 aa).

Residues 40 to 51 (PYPSGAGLHVGH) carry the 'HIGH' region motif. The 'KMSKS' region motif lies at 576–580 (KMSKS). An ATP-binding site is contributed by Lys579.

Belongs to the class-I aminoacyl-tRNA synthetase family.

It localises to the cytoplasm. It catalyses the reaction tRNA(Leu) + L-leucine + ATP = L-leucyl-tRNA(Leu) + AMP + diphosphate. The chain is Leucine--tRNA ligase from Geobacillus thermodenitrificans (strain NG80-2).